The following is a 944-amino-acid chain: Leucine--tRNA ligase 2 (944 aa).

The 'HIGH' region motif lies at 36–46 (PYPNSPWHIGH). Positions 623-627 (KMSKS) match the 'KMSKS' region motif. Lysine 626 contributes to the ATP binding site.

Belongs to the class-I aminoacyl-tRNA synthetase family.

Its subcellular location is the cytoplasm. It catalyses the reaction tRNA(Leu) + L-leucine + ATP = L-leucyl-tRNA(Leu) + AMP + diphosphate. In Saccharolobus solfataricus (strain ATCC 35092 / DSM 1617 / JCM 11322 / P2) (Sulfolobus solfataricus), this protein is Leucine--tRNA ligase 2.